The sequence spans 247 residues: Proteasome subunit alpha (247 aa).

It belongs to the peptidase T1A family. In terms of assembly, the 20S proteasome core is composed of 14 alpha and 14 beta subunits that assemble into four stacked heptameric rings, resulting in a barrel-shaped structure. The two inner rings, each composed of seven catalytic beta subunits, are sandwiched by two outer rings, each composed of seven alpha subunits. The catalytic chamber with the active sites is on the inside of the barrel. Has a gated structure, the ends of the cylinder being occluded by the N-termini of the alpha-subunits. Is capped at one or both ends by the proteasome regulatory ATPase, PAN.

The protein resides in the cytoplasm. With respect to regulation, the formation of the proteasomal ATPase PAN-20S proteasome complex, via the docking of the C-termini of PAN into the intersubunit pockets in the alpha-rings, triggers opening of the gate for substrate entry. Interconversion between the open-gate and close-gate conformations leads to a dynamic regulation of the 20S proteasome proteolysis activity. Its function is as follows. Component of the proteasome core, a large protease complex with broad specificity involved in protein degradation. The polypeptide is Proteasome subunit alpha (Methanosarcina acetivorans (strain ATCC 35395 / DSM 2834 / JCM 12185 / C2A)).